The following is a 237-amino-acid chain: Phosphoribosylaminoimidazole-succinocarboxamide synthase (237 aa).

It belongs to the SAICAR synthetase family.

The catalysed reaction is 5-amino-1-(5-phospho-D-ribosyl)imidazole-4-carboxylate + L-aspartate + ATP = (2S)-2-[5-amino-1-(5-phospho-beta-D-ribosyl)imidazole-4-carboxamido]succinate + ADP + phosphate + 2 H(+). It participates in purine metabolism; IMP biosynthesis via de novo pathway; 5-amino-1-(5-phospho-D-ribosyl)imidazole-4-carboxamide from 5-amino-1-(5-phospho-D-ribosyl)imidazole-4-carboxylate: step 1/2. This is Phosphoribosylaminoimidazole-succinocarboxamide synthase from Pseudomonas fluorescens (strain SBW25).